The chain runs to 94 residues: Trp operon repressor homolog (94 aa).

Residues 58–81 mediate DNA binding; the sequence is QREIAEKYGVSIAQITRGSNALKG.

The protein belongs to the TrpR family. In terms of assembly, homodimer.

The protein resides in the cytoplasm. Its function is as follows. This protein is an aporepressor. When complexed with L-tryptophan it binds the operator region of the trp operon and prevents the initiation of transcription. The sequence is that of Trp operon repressor homolog from Chlamydia trachomatis serovar A (strain ATCC VR-571B / DSM 19440 / HAR-13).